A 382-amino-acid polypeptide reads, in one-letter code: ATP phosphoribosyltransferase regulatory subunit (382 aa).

This sequence belongs to the class-II aminoacyl-tRNA synthetase family. HisZ subfamily. As to quaternary structure, heteromultimer composed of HisG and HisZ subunits.

The protein resides in the cytoplasm. Its pathway is amino-acid biosynthesis; L-histidine biosynthesis; L-histidine from 5-phospho-alpha-D-ribose 1-diphosphate: step 1/9. In terms of biological role, required for the first step of histidine biosynthesis. May allow the feedback regulation of ATP phosphoribosyltransferase activity by histidine. The sequence is that of ATP phosphoribosyltransferase regulatory subunit from Lacticaseibacillus casei (strain BL23) (Lactobacillus casei).